We begin with the raw amino-acid sequence, 114 residues long: FK506-binding protein 1 (114 aa).

Residues 26 to 114 (GDLVTIHYTG…IFEVELLKVN (89 aa)) form the PPIase FKBP-type domain.

It belongs to the FKBP-type PPIase family. FKBP1 subfamily.

Its subcellular location is the cytoplasm. It catalyses the reaction [protein]-peptidylproline (omega=180) = [protein]-peptidylproline (omega=0). Inhibited by both FK506 and rapamycin. In terms of biological role, PPIases accelerate the folding of proteins. It catalyzes the cis-trans isomerization of proline imidic peptide bonds in oligopeptides. The protein is FK506-binding protein 1 (FPR1) of Eremothecium gossypii (strain ATCC 10895 / CBS 109.51 / FGSC 9923 / NRRL Y-1056) (Yeast).